The chain runs to 89 residues: Small ribosomal subunit protein uS15 (89 aa).

The span at 1 to 18 (MALSAQEKDAIVKEHQTS) shows a compositional bias: basic and acidic residues. The segment at 1–25 (MALSAQEKDAIVKEHQTSETDTGSP) is disordered.

Belongs to the universal ribosomal protein uS15 family. In terms of assembly, part of the 30S ribosomal subunit. Forms a bridge to the 50S subunit in the 70S ribosome, contacting the 23S rRNA.

Its function is as follows. One of the primary rRNA binding proteins, it binds directly to 16S rRNA where it helps nucleate assembly of the platform of the 30S subunit by binding and bridging several RNA helices of the 16S rRNA. In terms of biological role, forms an intersubunit bridge (bridge B4) with the 23S rRNA of the 50S subunit in the ribosome. This chain is Small ribosomal subunit protein uS15, found in Teredinibacter turnerae (strain ATCC 39867 / T7901).